The chain runs to 248 residues: FCS-Like Zinc finger 14 (248 aa).

The span at 85–94 (VCRSEPNQPG) shows a compositional bias: polar residues. A disordered region spans residues 85–108 (VCRSEPNQPGRSDPVQFMSHGGST). The FLZ-type zinc finger occupies 181–224 (GFLNSCYLCRKKLHGQDIFIYRGEKAFCSTECRSSHIANDERKE).

This sequence belongs to the FLZ family. Interacts with KIN10 and KIN11 via its FLZ-type zinc finger domain. Interacts with KINB1, KINB2 and KINB3 via its N-terminal part.

Its subcellular location is the cytoplasm. The protein resides in the nucleus. May act as an adapter to facilitate the interaction of SnRK1 complex with effector proteins, conferring tissue- and stimulus-type specific differences in the SnRK1 regulation pathway. In Arabidopsis thaliana (Mouse-ear cress), this protein is FCS-Like Zinc finger 14.